Here is a 366-residue protein sequence, read N- to C-terminus: Chorismate synthase (366 aa).

NADP(+)-binding residues include Arg48 and Arg54. Residues 125–127 (RSS), 238–239 (NA), Gly278, 293–297 (KPTSS), and Arg319 contribute to the FMN site.

Belongs to the chorismate synthase family. Homotetramer. The cofactor is FMNH2.

It carries out the reaction 5-O-(1-carboxyvinyl)-3-phosphoshikimate = chorismate + phosphate. The protein operates within metabolic intermediate biosynthesis; chorismate biosynthesis; chorismate from D-erythrose 4-phosphate and phosphoenolpyruvate: step 7/7. Its function is as follows. Catalyzes the anti-1,4-elimination of the C-3 phosphate and the C-6 proR hydrogen from 5-enolpyruvylshikimate-3-phosphate (EPSP) to yield chorismate, which is the branch point compound that serves as the starting substrate for the three terminal pathways of aromatic amino acid biosynthesis. This reaction introduces a second double bond into the aromatic ring system. This is Chorismate synthase from Neisseria meningitidis serogroup A / serotype 4A (strain DSM 15465 / Z2491).